A 324-amino-acid chain; its full sequence is Olfactory receptor 52N5 (324 aa).

The Extracellular segment spans residues methionine 1–valine 33. Residues tryptophan 34–valine 54 traverse the membrane as a helical segment. Residues tyrosine 55–serine 62 lie on the Cytoplasmic side of the membrane. A helical membrane pass occupies residues leucine 63–threonine 84. At threonine 85 to alanine 108 the chain is on the extracellular side. A disulfide bridge connects residues cysteine 106 and cysteine 198. A helical transmembrane segment spans residues glutamine 109–leucine 129. The Cytoplasmic portion of the chain corresponds to aspartate 130–proline 148. The helical transmembrane segment at isoleucine 149–proline 169 threads the bilayer. Over phenylalanine 170–valine 205 the chain is Extracellular. Residues isoleucine 206–serine 226 traverse the membrane as a helical segment. Topologically, residues tyrosine 227–alanine 246 are cytoplasmic. The chain crosses the membrane as a helical span at residues phenylalanine 247–threonine 267. Over phenylalanine 268–histidine 283 the chain is Extracellular. The helical transmembrane segment at isoleucine 284–valine 304 threads the bilayer. The Cytoplasmic portion of the chain corresponds to lysine 305–glycine 324.

This sequence belongs to the G-protein coupled receptor 1 family.

It localises to the cell membrane. Its function is as follows. Odorant receptor. The protein is Olfactory receptor 52N5 (OR52N5) of Homo sapiens (Human).